We begin with the raw amino-acid sequence, 521 residues long: Probable rhamnogalacturonase B (521 aa).

Positions 1–21 (MRLHAFTLLSLLGLVPSFAAA) are cleaved as a signal peptide. Cysteine 42 and cysteine 68 are disulfide-bonded. A glycan (N-linked (GlcNAc...) asparagine) is linked at asparagine 145. The active-site Proton donor is aspartate 219. Cysteine 221 and cysteine 238 are oxidised to a cystine. N-linked (GlcNAc...) asparagine glycosylation occurs at asparagine 239. Histidine 294 is a catalytic residue. Asparagine 321 carries N-linked (GlcNAc...) asparagine glycosylation. Disulfide bonds link cysteine 344–cysteine 350 and cysteine 372–cysteine 381. Residues 462 to 521 (ETPAAASRSEQVVQGAPQETGQSAPESAGPVPSGNPGPVPTGGSRPSRHRHGHHHFGSAI) form a disordered region. Polar residues predominate over residues 469-486 (RSEQVVQGAPQETGQSAP). Over residues 507-521 (PSRHRHGHHHFGSAI) the composition is skewed to basic residues.

Belongs to the glycosyl hydrolase 28 family.

Its subcellular location is the secreted. It catalyses the reaction Endohydrolysis of alpha-D-GalA-(1-&gt;2)-alpha-L-Rha glycosidic bond in the rhamnogalacturonan I backbone with initial inversion of anomeric configuration releasing oligosaccharides with beta-D-GalA at the reducing end.. Functionally, pectinolytic enzymes consist of four classes of enzymes: pectine lyase, polygalacturonase, pectin methylesterase and rhamnogalacturonase. Hydrolyzes alpha-D-galacturonopyranosyl-(1,2)-alpha-L-rhamnopyranosyl linkages in the backbone of the hairy regions of pectins. The chain is Probable rhamnogalacturonase B (rhgB) from Aspergillus fumigatus (strain CBS 144.89 / FGSC A1163 / CEA10) (Neosartorya fumigata).